A 218-amino-acid chain; its full sequence is uncharacterized protein (218 aa).

Belongs to the HAD-like hydrolase superfamily.

The protein resides in the cytoplasm. It is found in the nucleus. This is an uncharacterized protein from Saccharomyces cerevisiae (strain ATCC 204508 / S288c) (Baker's yeast).